Here is a 91-residue protein sequence, read N- to C-terminus: Large ribosomal subunit protein bL31B (91 aa).

It belongs to the bacterial ribosomal protein bL31 family. Type B subfamily. Part of the 50S ribosomal subunit.

This is Large ribosomal subunit protein bL31B from Neisseria gonorrhoeae (strain NCCP11945).